The chain runs to 511 residues: UDP-N-acetylhexosamine pyrophosphorylase-like protein 1 (511 aa).

Residues 1–19 show a composition bias toward basic and acidic residues; it reads MDRSESAESAESRRRRAEE. Positions 1–22 are disordered; it reads MDRSESAESAESRRRRAEESGQ. The short motif at 117–120 is the Substrate binding element; that stretch reads LAGG. UTP contacts are provided by residues 117 to 120, Lys-131, Gln-205, and Gly-231; that span reads LAGG. Asn-232 provides a ligand contact to substrate. UTP is bound at residue Asp-262. The Substrate binding motif lies at 312-313; sequence EY. Lys-386 is a UTP binding site. Lys-416 contacts substrate.

Belongs to the UDPGP type 1 family.

In Xenopus tropicalis (Western clawed frog), this protein is UDP-N-acetylhexosamine pyrophosphorylase-like protein 1 (uap1l1).